Consider the following 577-residue polypeptide: Monooxygenase PC-14 (577 aa).

This sequence belongs to the FMO family. FAD serves as cofactor.

It participates in secondary metabolite biosynthesis. Functionally, monooxygenase; part of the gene cluster that mediates the biosynthesis of the indole diterpenes penitrems. The geranylgeranyl diphosphate (GGPP) synthase penG catalyzes the first step in penitrem biosynthesis via conversion of farnesyl pyrophosphate and isopentyl pyrophosphate into geranylgeranyl pyrophosphate (GGPP). Condensation of indole-3-glycerol phosphate with GGPP by the prenyl transferase penC then forms 3-geranylgeranylindole (3-GGI). Epoxidation by the FAD-dependent monooxygenase penM leads to a epoxidized-GGI that is substrate of the terpene cyclase penB for cyclization to yield paspaline. Paspaline is subsequently converted to 13-desoxypaxilline by the cytochrome P450 monooxygenase penP, the latter being then converted to paxilline by the cytochrome P450 monooxygenase penQ. Paxilline is converted to beta-paxitriol via C-10 ketoreduction by the short-chain dehydrogenase PC-15 which can be monoprenylated at the C-20 by the indole diterpene prenyltransferase penD. A two-step elimination (acetylation and elimination) process performed by the O-acetyltransferase PC-16 and the P.simplicissimum ptmI-ortholog not yet identified in P.crustosum, leads to the production of the prenylated form of penijanthine. The FAD-linked oxidoreductase ptmO then converts the prenylated form of penijanthine into PC-M5 which is in turn transformed into PC-M4 by the aromatic dimethylallyltransferase PC-22. A series of oxidation steps involving 4 cytochrome P450 monooxygenases (PC-21, PC-05, PC-23, PC-20) and a FAD-dependent monooxygenase (PC-14) are required for the transformation of PC-M4 to penitrems A and E. Synthesis of these final products is proposed to proceed via penitrems D and C (PC-21, PC-05, PC-14) and penitrems B and F (PC-21, PC-05, PC-14, PC-23). The chain is Monooxygenase PC-14 from Penicillium crustosum (Blue mold fungus).